We begin with the raw amino-acid sequence, 186 residues long: Large ribosomal subunit protein uL5 (186 aa).

This sequence belongs to the universal ribosomal protein uL5 family. As to quaternary structure, part of the 50S ribosomal subunit; contacts the 5S rRNA and probably tRNA. Forms a bridge to the 30S subunit in the 70S ribosome.

In terms of biological role, this is one of the proteins that bind and probably mediate the attachment of the 5S RNA into the large ribosomal subunit, where it forms part of the central protuberance. In the 70S ribosome it contacts protein S13 of the 30S subunit (bridge B1b), connecting the 2 subunits; this bridge is implicated in subunit movement. May contact the P site tRNA; the 5S rRNA and some of its associated proteins might help stabilize positioning of ribosome-bound tRNAs. The sequence is that of Large ribosomal subunit protein uL5 from Methanopyrus kandleri (strain AV19 / DSM 6324 / JCM 9639 / NBRC 100938).